A 1016-amino-acid polypeptide reads, in one-letter code: MQDKLIVRGAREHNLKDITVELPRDRFVVITGVSGSGKSTLAFDTIYAEGQRRYVESLSAYARQFLGLMEKPDVDSITGLSPAISIDQKTTSHNPRSTVGTVTEIHDYLRLLYARVGTPYCPICGRKIEKQSPSEVTDRLLAGFPDKRAILLAPAVRGRKGEYKKLFADLRREGYARVRVDGTLYELEEAEKLKLEKFEKHDVDIVIDRLTLRESDRSRIAESVELGIRRGEGLLRVLLPDAGEDGGAHEELYSEKFACPEHGSVLEELEPRSFSFNSPYGACGDCAGIGAKQEFSPERIIDEKLSIAGGAIIPWTKKGADAGIYYWDKLKALAEHLDFDLKTPWKDLPAKAQKAVLHGPGEAFEVVYRRGGKETMRFMTEFEGVITNLERRYADTESEFMRERLEELMELRPCPTCGGTRYKPEILAVRVGGLNISQTSGMSVLDADAFFQQLQEGELDHAAIEPFLKRHTGGTAKAHGPLHYEYDLGTFGAAVAAPILRAIRTRLKFLVDVGLDYLSLDRTANTLSGGEAQRIRLATQVGSGLTGVLYVLDEPSIGLHPKDNGRLIGTLKNLRDLGNSLLVVEHDEDTMLEADYLIDMGPGAGVHGGEVIASGTPEQVKQDKNSLTGKYLRGEMKIEVPAERRPGNGKFLKVFGARQNNLQDVDVSIPLGTMTVVTGPSGSGKSTLIHDILHATLARELNGAKTTPGLYDRIEGMEQLDKVIEIDQSPIGRTPRSNPATYTGVFTEIRDLFTRTPEARRRGYQAGRFSFNVKGGRCEHCKGDGVMKIEMNFLPDIYVPCEVCHGARYNRETLEVKYNHKTIADVLDLTVEDAHEFFEAIPTIERKMQLLLDVGLGYMKIGQPSTTLSGGEAQRIKLATELSKRATGRTIYILDEPTTGLHFEDVRKLMDVLQRLAEGGNTLVIIEHNLDVMKSADYLIDLGPEGGVRGGTVVAVGTPEEVAAHPTSYTGEYLRKVPGIVAAEPRARGEKAEKPAKAKAPAKKRTKKQTELVEAD.

Residue 32 to 39 (GVSGSGKS) coordinates ATP. The C4-type zinc finger occupies 259–286 (CPEHGSVLEELEPRSFSFNSPYGACGDC). ABC transporter domains lie at 315-627 (WTKK…KNSL) and 647-975 (GNGK…EYLR). 679–686 (GPSGSGKS) is a binding site for ATP. The C4-type zinc-finger motif lies at 778–804 (CEHCKGDGVMKIEMNFLPDIYVPCEVC). A disordered region spans residues 984–1016 (EPRARGEKAEKPAKAKAPAKKRTKKQTELVEAD). Residues 985–996 (PRARGEKAEKPA) are compositionally biased toward basic and acidic residues.

This sequence belongs to the ABC transporter superfamily. UvrA family. As to quaternary structure, forms a heterotetramer with UvrB during the search for lesions.

Its subcellular location is the cytoplasm. Functionally, the UvrABC repair system catalyzes the recognition and processing of DNA lesions. UvrA is an ATPase and a DNA-binding protein. A damage recognition complex composed of 2 UvrA and 2 UvrB subunits scans DNA for abnormalities. When the presence of a lesion has been verified by UvrB, the UvrA molecules dissociate. This is UvrABC system protein A from Deinococcus radiodurans (strain ATCC 13939 / DSM 20539 / JCM 16871 / CCUG 27074 / LMG 4051 / NBRC 15346 / NCIMB 9279 / VKM B-1422 / R1).